Consider the following 355-residue polypeptide: Eukaryotic initiation factor 4A-13 (355 aa).

The Q motif motif lies at 40-68 (DSFDAMGLQENLLRGIYAYGFEKPSAIQQ). A Helicase ATP-binding domain is found at 71 to 241 (IVPFCKGLDV…RKFMNQPVRI (171 aa)). 84–91 (AQSGTGKT) serves as a coordination point for ATP. Residues 189–192 (DEAD) carry the DEAD box motif. The region spanning 252-355 (GIKQFYVNVD…QQVSLVINYD (104 aa)) is the Helicase C-terminal domain.

Belongs to the DEAD box helicase family. eIF4A subfamily. In terms of assembly, eIF4F is a multi-subunit complex, the composition of which varies with external and internal environmental conditions. It is composed of at least EIF4A, EIF4E and EIF4G.

The catalysed reaction is ATP + H2O = ADP + phosphate + H(+). Its function is as follows. ATP-dependent RNA helicase which is a subunit of the eIF4F complex involved in cap recognition and is required for mRNA binding to ribosome. In the current model of translation initiation, eIF4A unwinds RNA secondary structures in the 5'-UTR of mRNAs which is necessary to allow efficient binding of the small ribosomal subunit, and subsequent scanning for the initiator codon. The protein is Eukaryotic initiation factor 4A-13 of Nicotiana tabacum (Common tobacco).